Consider the following 662-residue polypeptide: Acetyl-coenzyme A synthetase (662 aa).

CoA contacts are provided by residues 197 to 200 and Thr317; that span reads RKGK. ATP contacts are provided by residues 393-395, 417-422, Asp510, and Arg525; these read GEP and DTWWQT. Residue Ser533 coordinates CoA. Arg536 is a binding site for ATP. The Mg(2+) site is built by His549 and Val552. Lys623 is subject to N6-acetyllysine.

It belongs to the ATP-dependent AMP-binding enzyme family. The cofactor is Mg(2+). Post-translationally, acetylated. Deacetylation by the SIR2-homolog deacetylase activates the enzyme.

The catalysed reaction is acetate + ATP + CoA = acetyl-CoA + AMP + diphosphate. Its function is as follows. Catalyzes the conversion of acetate into acetyl-CoA (AcCoA), an essential intermediate at the junction of anabolic and catabolic pathways. AcsA undergoes a two-step reaction. In the first half reaction, AcsA combines acetate with ATP to form acetyl-adenylate (AcAMP) intermediate. In the second half reaction, it can then transfer the acetyl group from AcAMP to the sulfhydryl group of CoA, forming the product AcCoA. This is Acetyl-coenzyme A synthetase from Helicobacter pylori (strain G27).